A 181-amino-acid chain; its full sequence is Ribulose bisphosphate carboxylase small subunit, chloroplastic 1 (181 aa).

The N-terminal 57 residues, 1-57 (MASSIVSSAAAATRSNVAQASMVAPFTGLKSAASFPVTKKNNNVDITSLASNGGRVR), are a transit peptide targeting the chloroplast.

Belongs to the RuBisCO small chain family. As to quaternary structure, (Microbial infection) Binds to tobamovirus movement protein; this interaction seems required for viral systemic movement. Heterohexadecamer of 8 large and 8 small subunits.

It localises to the plastid. Its subcellular location is the chloroplast. The protein localises to the cell junction. It is found in the plasmodesma. Its function is as follows. RuBisCO catalyzes two reactions: the carboxylation of D-ribulose 1,5-bisphosphate, the primary event in carbon dioxide fixation, as well as the oxidative fragmentation of the pentose substrate. Both reactions occur simultaneously and in competition at the same active site. Although the small subunit is not catalytic it is essential for maximal activity. Involved in antiviral defenses. The sequence is that of Ribulose bisphosphate carboxylase small subunit, chloroplastic 1 from Solanum lycopersicum (Tomato).